The chain runs to 151 residues: Putative pre-16S rRNA nuclease (151 aa).

Belongs to the YqgF nuclease family.

It is found in the cytoplasm. Could be a nuclease involved in processing of the 5'-end of pre-16S rRNA. This is Putative pre-16S rRNA nuclease from Bifidobacterium adolescentis (strain ATCC 15703 / DSM 20083 / NCTC 11814 / E194a).